The primary structure comprises 313 residues: MANSTTVTEFILLGLSDACELQVLIFLGFLLTYFLILLGNFLIIFITLVDRRLYTPMYYFLRNFAMLEIWFTSVIFPKMLTNIITGHKTISLLGCFLQAFLYFFLGTTEFFLLAVMSFDRYVAICNPLRYATIMSKRVCVQLVFCSWMSGLLLIIVPSSIVFQQPFCGPNIINHFFCDNFPLMELICADTSLVEFLGFVIANFSLLGTLAVTATCYGHILYTILHIPSAKERKKAFSTCSSHIIVVSLFYGSCIFMYVRSGKNGQGEDHNKVVALLNTVVTPTLNPFIYTLRNKQVKQVFREHVSKFQKFSQT.

Asn-3 carries N-linked (GlcNAc...) asparagine glycosylation. The next 7 membrane-spanning stretches (helical) occupy residues 25–45 (IFLGFLLTYFLILLGNFLIIF), 64–84 (FAMLEIWFTSVIFPKMLTNII), 96–116 (FLQAFLYFFLGTTEFFLLAVM), 142–162 (LVFCSWMSGLLLIIVPSSIVF), 192–212 (LVEFLGFVIANFSLLGTLAVT), 238–258 (TCSSHIIVVSLFYGSCIFMYV), and 271–291 (KVVALLNTVVTPTLNPFIYTL). A disulfide bridge links Cys-95 with Cys-177.

It belongs to the G-protein coupled receptor 1 family.

Its subcellular location is the cell membrane. Its function is as follows. Odorant receptor. Activated by (-)-citronellal and to a lesser extent by (+)-citronellal. Not activated by carvone or limonene. This is Olfactory receptor 6E1 from Mus musculus (Mouse).